Consider the following 210-residue polypeptide: MKFAKIPMATIIRLSIYMRTLQELLEDDVDVISSERLAKQCGVNPAQIRKDLAYFGEFGVRGVGYRVNELVNQIKEILGLNRPWNLAMVGLGNLGSALIRHGNFIKHGYMFTAAFDVDPQKVGKRLPNGLVINHVDELEDVIKEREVHVGIITTPASEAQSVANQLVLAGINGILNFAPVQIQVPDCCHVENVDFTIKLDSIAYHLSFGS.

A DNA-binding region (H-T-H motif) is located at residues 16–55 (IYMRTLQELLEDDVDVISSERLAKQCGVNPAQIRKDLAYF). Residue 90–95 (GLGNLG) coordinates NAD(+).

This sequence belongs to the transcriptional regulatory Rex family. Homodimer.

The protein resides in the cytoplasm. In terms of biological role, modulates transcription in response to changes in cellular NADH/NAD(+) redox state. This is Redox-sensing transcriptional repressor Rex from Syntrophobacter fumaroxidans (strain DSM 10017 / MPOB).